A 226-amino-acid polypeptide reads, in one-letter code: Clarin-3 (226 aa).

Residues 8-28 (LMFLSSFFTSLGSFIVICSIL) form a helical membrane-spanning segment. N83 is a glycosylation site (N-linked (GlcNAc...) asparagine). 3 helical membrane-spanning segments follow: residues 92-112 (VTIL…GFTF), 129-149 (VYTW…LFVA), and 181-201 (FWLI…IIFY).

It belongs to the clarin family.

The protein resides in the membrane. This chain is Clarin-3 (CLRN3), found in Homo sapiens (Human).